The sequence spans 337 residues: Ketol-acid reductoisomerase (NADP(+)) (337 aa).

The KARI N-terminal Rossmann domain maps to 3–183 (VEMFYDDDAD…GGARAGVIKT (181 aa)). Residues 26-29 (YGSQ), K49, S52, S54, and 84-87 (DTAQ) contribute to the NADP(+) site. Residue H109 is part of the active site. G135 provides a ligand contact to NADP(+). The region spanning 184–329 (TFKEETETDL…KKLRDLMSWV (146 aa)) is the KARI C-terminal knotted domain. D192, E196, E228, and E232 together coordinate Mg(2+). S253 is a substrate binding site.

The protein belongs to the ketol-acid reductoisomerase family. Requires Mg(2+) as cofactor.

It carries out the reaction (2R)-2,3-dihydroxy-3-methylbutanoate + NADP(+) = (2S)-2-acetolactate + NADPH + H(+). It catalyses the reaction (2R,3R)-2,3-dihydroxy-3-methylpentanoate + NADP(+) = (S)-2-ethyl-2-hydroxy-3-oxobutanoate + NADPH + H(+). The protein operates within amino-acid biosynthesis; L-isoleucine biosynthesis; L-isoleucine from 2-oxobutanoate: step 2/4. Its pathway is amino-acid biosynthesis; L-valine biosynthesis; L-valine from pyruvate: step 2/4. Functionally, involved in the biosynthesis of branched-chain amino acids (BCAA). Catalyzes an alkyl-migration followed by a ketol-acid reduction of (S)-2-acetolactate (S2AL) to yield (R)-2,3-dihydroxy-isovalerate. In the isomerase reaction, S2AL is rearranged via a Mg-dependent methyl migration to produce 3-hydroxy-3-methyl-2-ketobutyrate (HMKB). In the reductase reaction, this 2-ketoacid undergoes a metal-dependent reduction by NADPH to yield (R)-2,3-dihydroxy-isovalerate. The sequence is that of Ketol-acid reductoisomerase (NADP(+)) from Mycobacterium sp. (strain JLS).